The following is a 458-amino-acid chain: Succinate-semialdehyde dehydrogenase [NADP(+)] 1 (458 aa).

NADP(+) is bound by residues 134-135 (WN), 158-161 (KHAS), and 210-211 (GS). The active-site Proton acceptor is the Glu232. An NADP(+)-binding site is contributed by Leu233. Residue Cys266 is the Nucleophile of the active site. NADP(+) is bound at residue Glu363.

It belongs to the aldehyde dehydrogenase family.

The catalysed reaction is succinate semialdehyde + NADP(+) + H2O = succinate + NADPH + 2 H(+). Its function is as follows. Catalyzes the NADP(+)-dependent oxidation of succinate semialdehyde to succinate. It is believed to be the main source of succinate semialdehyde dehydrogenase activity in Mycobacterium. In Mycobacterium ulcerans (strain Agy99), this protein is Succinate-semialdehyde dehydrogenase [NADP(+)] 1 (gabD1).